The primary structure comprises 189 residues: GMP synthase [glutamine-hydrolyzing] subunit A (189 aa).

The 185-residue stretch at 5–189 (KILVVNNYGQ…MNFFEVCDLY (185 aa)) folds into the Glutamine amidotransferase type-1 domain. C79 functions as the Nucleophile in the catalytic mechanism. Active-site residues include H166 and E168.

Heterodimer composed of a glutamine amidotransferase subunit (A) and a GMP-binding subunit (B).

The catalysed reaction is XMP + L-glutamine + ATP + H2O = GMP + L-glutamate + AMP + diphosphate + 2 H(+). It participates in purine metabolism; GMP biosynthesis; GMP from XMP (L-Gln route): step 1/1. Its function is as follows. Catalyzes the synthesis of GMP from XMP. This Methanosarcina mazei (strain ATCC BAA-159 / DSM 3647 / Goe1 / Go1 / JCM 11833 / OCM 88) (Methanosarcina frisia) protein is GMP synthase [glutamine-hydrolyzing] subunit A.